A 133-amino-acid chain; its full sequence is Small ribosomal subunit protein uS8 (133 aa).

Belongs to the universal ribosomal protein uS8 family. In terms of assembly, part of the 30S ribosomal subunit. Contacts proteins S5 and S12.

Its function is as follows. One of the primary rRNA binding proteins, it binds directly to 16S rRNA central domain where it helps coordinate assembly of the platform of the 30S subunit. The chain is Small ribosomal subunit protein uS8 from Micrococcus luteus (Micrococcus lysodeikticus).